The following is a 269-amino-acid chain: Shikimate dehydrogenase (NADP(+)) (269 aa).

Shikimate contacts are provided by residues 22–24 and Thr-68; that span reads TLS. The active-site Proton acceptor is Lys-72. Shikimate-binding residues include Asn-93 and Asp-104. Residues 128–132, 152–157, and Phe-210 contribute to the NADP(+) site; these read GAGGA and NRTKSR. Tyr-212 contributes to the shikimate binding site. Gly-233 lines the NADP(+) pocket.

This sequence belongs to the shikimate dehydrogenase family. As to quaternary structure, homodimer.

The catalysed reaction is shikimate + NADP(+) = 3-dehydroshikimate + NADPH + H(+). It functions in the pathway metabolic intermediate biosynthesis; chorismate biosynthesis; chorismate from D-erythrose 4-phosphate and phosphoenolpyruvate: step 4/7. Involved in the biosynthesis of the chorismate, which leads to the biosynthesis of aromatic amino acids. Catalyzes the reversible NADPH linked reduction of 3-dehydroshikimate (DHSA) to yield shikimate (SA). This chain is Shikimate dehydrogenase (NADP(+)), found in Saccharolobus solfataricus (strain ATCC 35092 / DSM 1617 / JCM 11322 / P2) (Sulfolobus solfataricus).